The primary structure comprises 80 residues: UPF0270 protein ASA_3305 (80 aa).

Belongs to the UPF0270 family.

The sequence is that of UPF0270 protein ASA_3305 from Aeromonas salmonicida (strain A449).